The primary structure comprises 218 residues: 1-Cys peroxiredoxin (218 aa).

The Thioredoxin domain maps to 4–164 (LTIGDTIPDL…VLRVVESLQK (161 aa)). Residue Cys46 is the Cysteine sulfenic acid (-SOH) intermediate of the active site. The short motif at 194–217 (KEMFPQGFKTADLPSKKEYLRFTN) is the Bipartite nuclear localization signal element.

Belongs to the peroxiredoxin family. Prx6 subfamily.

It is found in the nucleus. The protein resides in the cytoplasm. It carries out the reaction a hydroperoxide + [thioredoxin]-dithiol = an alcohol + [thioredoxin]-disulfide + H2O. Thiol-specific peroxidase that catalyzes the reduction of hydrogen peroxide and organic hydroperoxides to water and alcohols, respectively. Seems to contribute to the inhibition of germination during stress. The sequence is that of 1-Cys peroxiredoxin from Medicago truncatula (Barrel medic).